We begin with the raw amino-acid sequence, 423 residues long: Gamma-glutamyl phosphate reductase (423 aa).

It belongs to the gamma-glutamyl phosphate reductase family.

It is found in the cytoplasm. It carries out the reaction L-glutamate 5-semialdehyde + phosphate + NADP(+) = L-glutamyl 5-phosphate + NADPH + H(+). The protein operates within amino-acid biosynthesis; L-proline biosynthesis; L-glutamate 5-semialdehyde from L-glutamate: step 2/2. Its function is as follows. Catalyzes the NADPH-dependent reduction of L-glutamate 5-phosphate into L-glutamate 5-semialdehyde and phosphate. The product spontaneously undergoes cyclization to form 1-pyrroline-5-carboxylate. The sequence is that of Gamma-glutamyl phosphate reductase from Burkholderia orbicola (strain AU 1054).